A 445-amino-acid chain; its full sequence is Questin oxidase (445 aa).

Belongs to the questin oxidase family. NADPH is required as a cofactor. As to expression, specifically expressed in conidia.

It participates in secondary metabolite biosynthesis. Its function is as follows. Questin oxidase; part of the gene cluster that mediates the biosynthesis of trypacidin, a mycotoxin with antiprotozoal activity and that plays a role in the infection process. The pathway begins with the synthesis of atrochrysone thioester by the polyketide synthase (PKS) tpcC. The atrochrysone carboxyl ACP thioesterase tpcB then breaks the thioester bond and releases the atrochrysone carboxylic acid from tpcC. The decarboxylase tpcK converts atrochrysone carboxylic acid to atrochrysone which is further reduced into emodin anthrone. The next step is performed by the emodin anthrone oxygenase tpcL that catalyzes the oxidation of emodinanthrone to emodin. Emodin O-methyltransferase encoded by tpcA catalyzes methylation of the 8-hydroxy group of emodin to form questin. Ring cleavage of questin by questin oxidase tpcI leads to desmethylsulochrin via several intermediates including questin epoxide. Another methylation step catalyzed by tpcM leads to the formation of sulochrin which is further converted to monomethylsulfochrin by tpcH. Finally, the tpcJ catalyzes the conversion of monomethylsulfochrin to trypacidin. Trypacidin is toxic for human pulmonary and bronchial epithelial cells by initiating the intracellular formation of nitric oxide (NO) and hydrogen peroxide (H(2)O(2)), thus triggering host necrotic cell death. The trypacidin pathway is also able to produce endocrocin via a distinct route from the endocrocin Enc pathway. The sequence is that of Questin oxidase from Aspergillus fumigatus (strain ATCC MYA-4609 / CBS 101355 / FGSC A1100 / Af293) (Neosartorya fumigata).